A 915-amino-acid chain; its full sequence is Rab3 GTPase-activating protein catalytic subunit (915 aa).

Belongs to the Rab3-GAP catalytic subunit family. In terms of assembly, the Rab3 GTPase-activating complex is a heterodimer composed of rbg-1 and rbg-2.

Its subcellular location is the cytoplasm. Its function is as follows. Probable catalytic subunit of a GTPase activating protein that has specificity for Rab3 subfamily. Rab3 proteins are involved in regulated exocytosis of neurotransmitters and hormones. Specifically converts active Rab3-GTP to the inactive form Rab3-GDP. In Caenorhabditis elegans, this protein is Rab3 GTPase-activating protein catalytic subunit (rbg-1).